Here is a 577-residue protein sequence, read N- to C-terminus: Monooxygenase PC-14 (577 aa).

It belongs to the FMO family. Requires FAD as cofactor.

It functions in the pathway secondary metabolite biosynthesis. In terms of biological role, monooxygenase; part of the gene cluster that mediates the biosynthesis of the indole diterpenes penitrems. The geranylgeranyl diphosphate (GGPP) synthase penG catalyzes the first step in penitrem biosynthesis via conversion of farnesyl pyrophosphate and isopentyl pyrophosphate into geranylgeranyl pyrophosphate (GGPP). Condensation of indole-3-glycerol phosphate with GGPP by the prenyl transferase penC then forms 3-geranylgeranylindole (3-GGI). Epoxidation by the FAD-dependent monooxygenase penM leads to a epoxidized-GGI that is substrate of the terpene cyclase penB for cyclization to yield paspaline. Paspaline is subsequently converted to 13-desoxypaxilline by the cytochrome P450 monooxygenase penP, the latter being then converted to paxilline by the cytochrome P450 monooxygenase penQ. Paxilline is converted to beta-paxitriol via C-10 ketoreduction by the short-chain dehydrogenase PC-15 which can be monoprenylated at the C-20 by the indole diterpene prenyltransferase penD. A two-step elimination (acetylation and elimination) process performed by the O-acetyltransferase PC-16 and the P.simplicissimum ptmI-ortholog not yet identified in P.crustosum, leads to the production of the prenylated form of penijanthine. The FAD-linked oxidoreductase ptmO then converts the prenylated form of penijanthine into PC-M5 which is in turn transformed into PC-M4 by the aromatic dimethylallyltransferase PC-22. A series of oxidation steps involving 4 cytochrome P450 monooxygenases (PC-21, PC-05, PC-23, PC-20) and a FAD-dependent monooxygenase (PC-14) are required for the transformation of PC-M4 to penitrems A and E. Synthesis of these final products is proposed to proceed via penitrems D and C (PC-21, PC-05, PC-14) and penitrems B and F (PC-21, PC-05, PC-14, PC-23). The polypeptide is Monooxygenase PC-14 (Penicillium crustosum (Blue mold fungus)).